The primary structure comprises 264 residues: Small ribosomal subunit protein uS2 (264 aa).

Residues 243–253 show a composition bias toward acidic residues; the sequence is IEAAEDGEEVD. Positions 243–264 are disordered; the sequence is IEAAEDGEEVDNAQLTSSQGRS. Positions 255–264 are enriched in polar residues; the sequence is AQLTSSQGRS.

It belongs to the universal ribosomal protein uS2 family.

The polypeptide is Small ribosomal subunit protein uS2 (Deinococcus geothermalis (strain DSM 11300 / CIP 105573 / AG-3a)).